Reading from the N-terminus, the 688-residue chain is Collagen alpha-2(IX) chain (688 aa).

The first 22 residues, 1-22 (MTAVPAPRSLFVLLQVLWLALA), serve as a signal peptide directing secretion. The segment at 26–162 (GPPGEPGPPG…PGKPGRPGTI (137 aa)) is triple-helical region 4 (COL4). The segment at 26 to 171 (GPPGEPGPPG…IQGLEGSADF (146 aa)) is disordered. 2 stretches are compositionally biased toward pro residues: residues 28 to 42 (PGEP…PPGV) and 105 to 126 (LPGP…PGPV). Positions 128–137 (LPGEIGTPGP) are enriched in low complexity. Over residues 138–156 (KGDPGPEGPSGPPGPPGKP) the composition is skewed to pro residues. P159 is subject to 4-hydroxyproline. The segment at 163-179 (QGLEGSADFLCPTNCPA) is nonhelical region 4 (NC4). A glycan (O-linked (Xyl...) (glycosaminoglycan) serine) is linked at S168. A triple-helical region 3 (COL3) region spans residues 180 to 518 (GVKGPQGLQG…PGRQGVVGRA (339 aa)). The residue at position 182 (K182) is a 5-hydroxylysine. K182 is a glycosylation site (O-linked (Gal...) hydroxylysine). The tract at residues 183 to 517 (GPQGLQGVKG…QPGRQGVVGR (335 aa)) is disordered. Low complexity-rich tracts occupy residues 289–314 (PQGI…PGIP) and 392–412 (RGPV…EQGP). Gly residues predominate over residues 435–444 (GPRGGVGDPG). Positions 502–517 (DRGVPGQPGRQGVVGR) are enriched in low complexity. Residues 519–548 (ASDQHIVDVVLKMIQEQLAEVAVSAKREAL) are nonhelical region 3 (NC3). The interval 549–631 (GAAGMVGLPG…PGLPGRPGQA (83 aa)) is triple-helical region 2 (COL2). A disordered region spans residues 553–664 (MVGLPGPPGP…GPVGLPGFCE (112 aa)). A compositionally biased stretch (basic and acidic residues) spans 598–610 (KRGEKGDRGEMGH). Positions 632 to 633 (IN) are nonhelical region 2 (NC2). The tract at residues 634-663 (GKDGDRGSPGAPGEAGRPGRPGPVGLPGFC) is triple-helical region 1 (COL1). A nonhelical region 1 (NC1) region spans residues 664-688 (EPAACLGASAYTSARLTEPGSIKGP).

The protein belongs to the fibril-associated collagens with interrupted helices (FACIT) family. Heterotrimer of an alpha 1(IX), an alpha 2(IX) and an alpha 3(IX) chain. The chains are linked to each other by interchain disulfide bonds. Trimers are also cross-linked via hydroxylysines. Covalently linked to the telopeptides of type II collagen by lysine-derived cross-links. Post-translationally, prolines at the third position of the tripeptide repeating unit (G-X-Y) are hydroxylated in some or all of the chains.

The protein resides in the secreted. The protein localises to the extracellular space. Its subcellular location is the extracellular matrix. Functionally, structural component of hyaline cartilage and vitreous of the eye. This chain is Collagen alpha-2(IX) chain (Col9a2), found in Mus musculus (Mouse).